The sequence spans 780 residues: MATVDLEKLRMSGAGKAIGVLTSGGDAQGMNAAVRAVTRMGIYVGAKVFLIYEGYEGLVEGGENIKPANWLSVSNIIQLGGTIIGSARCKAFTTREGRLAAAYNLLQHGITNLCVIGGDGSLTGANIFRNEWGSLLEELVKEGKISESTAQNYAHLTIAGLVGSIDNDFCGTDMTIGTDSALHRIMEVIDAITTTAQSHQRTFVLEVMGRHCGYLALVSALASGADWLFIPEAPPEDGWENFMCERLGETRSRGSRLNIIIIAEGAIDRHGKPISSSYVKDLVVQRLGFDTRVTVLGHVQRGGTPSAFDRILSSKMGMEAVMALLEATPDTPACVVSLSGNQSVRLPLMECVQVTKDVQKAMDEERFDEAIQLRGRSFENNWKIYKLLAHQKVSKEKSNFSLAILNVGAPAAGMNAAVRSAVRTGISEGHTVYIVHDGFEGLAKGQVQEVGWHDVAGWLGRGGSMLGTKRTLPKPHLEAIVENLRTYNIHALLVIGGFEAYEGVLQLVEARGRYEELCIVMCVIPATISNNVPGTDFSLGSDTAVNAAMESCDRIKQSASGTKRRVFIVETMGGYCGYLATVTGIAVGADAAYVFEDPFNIHDLKANVEHMTEKMKTDIQRGLVLRNEKCHEHYTTEFLYNLYSSEGRGVFDCRTNVLGHLQQGGAPTPFDRNYGTKLGVKAMLWVSEKLRDVYRKGRVFANAPDSACVIGLRKKVVAFSPVTELKKETDFEHRMPREQWWLNLRLMLKMLAHYRISMADYVSGELEHVTRRTLSIDKGF.

An N-acetylalanine modification is found at A2. Residues 2-390 (ATVDLEKLRM…NWKIYKLLAH (389 aa)) form an N-terminal catalytic PFK domain 1 region. Residues G25, 88–89 (RC), and 118–121 (GDGS) contribute to the ATP site. D119 is a Mg(2+) binding site. Substrate contacts are provided by residues 164–166 (SID), R201, 208–210 (MGR), E264, R292, and 298–301 (HVQR). The Proton acceptor role is filled by D166. S377 is subject to Phosphoserine. The tract at residues 391–400 (QKVSKEKSNF) is interdomain linker. Residues 401 to 780 (SLAILNVGAP…RRTLSIDKGF (380 aa)) form a C-terminal regulatory PFK domain 2 region. Residues R470, 527–531 (TISNN), R565, 572–574 (MGG), and E628 contribute to the beta-D-fructose 2,6-bisphosphate site. O-linked (GlcNAc) serine glycosylation occurs at S529. At Y640 the chain carries Phosphotyrosine. Beta-D-fructose 2,6-bisphosphate-binding positions include R654, 660–663 (HLQQ), and R734. S775 carries the phosphoserine modification.

It belongs to the phosphofructokinase type A (PFKA) family. ATP-dependent PFK group I subfamily. Eukaryotic two domain clade 'E' sub-subfamily. As to quaternary structure, homo- and heterotetramers. Phosphofructokinase (PFK) enzyme functions as a tetramer composed of different combinations of 3 types of subunits, called PFKM (M), PFKL (L) and PFKP (P). The composition of the PFK tetramer differs according to the tissue type it is present in. The kinetic and regulatory properties of the tetrameric enzyme are dependent on the subunit composition, hence can vary across tissues. The cofactor is Mg(2+). Post-translationally, glcNAcylation at Ser-529 by OGT decreases enzyme activity, leading to redirect glucose flux through the oxidative pentose phosphate pathway. Glycosylation is stimulated by both hypoxia and glucose deprivation.

It is found in the cytoplasm. The catalysed reaction is beta-D-fructose 6-phosphate + ATP = beta-D-fructose 1,6-bisphosphate + ADP + H(+). It functions in the pathway carbohydrate degradation; glycolysis; D-glyceraldehyde 3-phosphate and glycerone phosphate from D-glucose: step 3/4. Allosterically activated by ADP, AMP, or fructose 2,6-bisphosphate, and allosterically inhibited by ATP or citrate. GlcNAcylation by OGT overcomes allosteric regulation. Its function is as follows. Catalyzes the phosphorylation of D-fructose 6-phosphate to fructose 1,6-bisphosphate by ATP, the first committing step of glycolysis. Negatively regulates the phagocyte oxidative burst in response to bacterial infection by controlling cellular NADPH biosynthesis and NADPH oxidase-derived reactive oxygen species. Upon macrophage activation, drives the metabolic switch toward glycolysis, thus preventing glucose turnover that produces NADPH via pentose phosphate pathway. This chain is ATP-dependent 6-phosphofructokinase, liver type, found in Mus musculus (Mouse).